Here is an 889-residue protein sequence, read N- to C-terminus: Oxysterol-binding protein-related protein 8 (889 aa).

Position 1 is an N-acetylmethionine (methionine 1). Residues 1–129 are disordered; that stretch reads MEAALADGEP…SLKVQKKNYR (129 aa). A phosphoserine mark is found at serine 14, serine 65, and serine 68. Over residues 62–71 the composition is skewed to polar residues; that stretch reads PSLSPASLHS. Basic and acidic residues-rich tracts occupy residues 73–88, 95–109, and 116–129; these read GFERGKEDISQNKDDS, SKSESKLYNGSEKDS, and TKKESLKVQKKNYR. Residues 148–265 form the PH domain; it reads VIVMADWLKI…WMDALELALK (118 aa). Phosphoserine occurs at positions 314, 328, and 342. The span at 321-336 shows a compositional bias: basic and acidic residues; the sequence is FKDQDLYSDKSDKEND. Residues 321-374 are disordered; the sequence is FKDQDLYSDKSDKENDPEHDESDNEVLGKSEESDTDTSERQDDSYIDPEPVEPL. Residues 346-363 show a composition bias toward basic and acidic residues; that stretch reads VLGKSEESDTDTSERQDD. Residues 420 to 425, 482 to 485, and 514 to 515 contribute to the a 1,2-diacyl-sn-glycero-3-phospho-(1D-myo-inositol 4-phosphate) site; these read LSRVVL, KPYN, and HH. Residues 420-425 and asparagine 485 contribute to the a 1,2-diacyl-sn-glycero-3-phospho-L-serine site; that span reads LSRVVL. Serine 540 contacts a 1,2-diacyl-sn-glycero-3-phospho-L-serine. A 1,2-diacyl-sn-glycero-3-phospho-(1D-myo-inositol 4-phosphate) contacts are provided by lysine 706, glutamate 710, and arginine 714. The interval 772-823 is disordered; it reads HRTPMVSVPKMKHKPTRQQKKVVKGYSSPEPDIQDSSGSEAQSVKPSTRRKK. Positions 781–794 are enriched in basic residues; that stretch reads KMKHKPTRQQKKVV. The span at 805–817 shows a compositional bias: polar residues; sequence QDSSGSEAQSVKP. 4 positions are modified to phosphoserine: serine 807, serine 808, serine 810, and serine 814. Residues 871–888 traverse the membrane as a helical segment; it reads YFVIFLLILLQVIINFIF.

The protein belongs to the OSBP family. In terms of assembly, interacts with SPAG5. Interacts with NUP62. As to expression, widely expressed. Most abundant in liver, spleen, kidney, brain and adipose tissue.

Its subcellular location is the endoplasmic reticulum membrane. The protein localises to the nucleus membrane. Functionally, lipid transporter involved in lipid countertransport between the endoplasmic reticulum and the plasma membrane: specifically exchanges phosphatidylserine with phosphatidylinositol 4-phosphate (PI4P), delivering phosphatidylserine to the plasma membrane in exchange for PI4P, which is degraded by the SAC1/SACM1L phosphatase in the endoplasmic reticulum. Binds phosphatidylserine and PI4P in a mutually exclusive manner. Binds oxysterol, 25-hydroxycholesterol and cholesterol. The polypeptide is Oxysterol-binding protein-related protein 8 (Mus musculus (Mouse)).